Here is a 726-residue protein sequence, read N- to C-terminus: DNA ligase (726 aa).

NAD(+)-binding positions include 34–38 (DAEYD), 83–84 (SL), and Glu115. Lys117 (N6-AMP-lysine intermediate) is an active-site residue. The NAD(+) site is built by Arg138, Glu190, Lys306, and Lys330. The Zn(2+) site is built by Cys424, Cys427, Cys442, and Cys448. In terms of domain architecture, BRCT spans 608 to 698 (SRGNALAGKT…RTADDQATPA (91 aa)). A disordered region spans residues 690 to 726 (TADDQATPASDRRAATASVPPSDDAPGSPRQLDFDLT).

This sequence belongs to the NAD-dependent DNA ligase family. LigA subfamily. It depends on Mg(2+) as a cofactor. Requires Mn(2+) as cofactor.

It catalyses the reaction NAD(+) + (deoxyribonucleotide)n-3'-hydroxyl + 5'-phospho-(deoxyribonucleotide)m = (deoxyribonucleotide)n+m + AMP + beta-nicotinamide D-nucleotide.. Its function is as follows. DNA ligase that catalyzes the formation of phosphodiester linkages between 5'-phosphoryl and 3'-hydroxyl groups in double-stranded DNA using NAD as a coenzyme and as the energy source for the reaction. It is essential for DNA replication and repair of damaged DNA. This is DNA ligase from Roseiflexus sp. (strain RS-1).